The primary structure comprises 1212 residues: Filamin-A-interacting protein 1 (1212 aa).

Over residues methionine 1 to histidine 15 the composition is skewed to polar residues. Positions methionine 1–glutamate 73 are disordered. Basic and acidic residues-rich tracts occupy residues proline 32–aspartate 47 and proline 60–glutamate 73. Serine 137 is subject to Phosphoserine. Coiled coils occupy residues aspartate 191–methionine 575 and proline 623–leucine 777. Disordered regions lie at residues tryptophan 871–glutamate 898 and lysine 948–arginine 975. Serine 978 is subject to Phosphoserine. The tract at residues valine 1102 to glutamine 1190 is disordered. Over residues valine 1124–threonine 1138 the composition is skewed to low complexity. A compositionally biased stretch (polar residues) spans arginine 1139–threonine 1155.

Belongs to the FILIP1 family. In terms of assembly, interacts with FLNA. Interacts with RHOD (in GTP-bound form). Expressed in muscle tissue, including heart. Found in cortical ventricular zone.

It is found in the cytoplasm. Its subcellular location is the cytoskeleton. The protein localises to the stress fiber. Its function is as follows. By acting through a filamin-A/F-actin axis, it controls the start of neocortical cell migration from the ventricular zone. May be able to induce the degradation of Filamin A. This chain is Filamin-A-interacting protein 1 (Filip1), found in Rattus norvegicus (Rat).